Consider the following 259-residue polypeptide: Binding partner of ACD11 1 (259 aa).

One can recognise an RRM domain in the interval 6–77 (RSVKVGNLSS…QSVIIELAPN (72 aa)). Residues 219-259 (GEVGQKTKEKVEAEQPSQPAQSQQQLPEGYSPIHSSEYSKN) are disordered. A compositionally biased stretch (low complexity) spans 232–243 (EQPSQPAQSQQQ).

As to quaternary structure, interacts with ACD11, PR1F2 and PR1F3.

Its subcellular location is the cytoplasm. It localises to the membrane. The protein is Binding partner of ACD11 1 (BPA1) of Arabidopsis thaliana (Mouse-ear cress).